The primary structure comprises 344 residues: N,N-dimethyltransferase OxyT (344 aa).

S-adenosyl-L-methionine contacts are provided by residues Asp-205 and 231–233; that span reads GDF.

It belongs to the class I-like SAM-binding methyltransferase superfamily. Cation-independent O-methyltransferase family.

It carries out the reaction 4-amino-4-dedimethylamino-anhydrotetracycline + S-adenosyl-L-methionine = 4-methylamino-4-dedimethylamino-anhydrotetracycline + S-adenosyl-L-homocysteine + H(+). It catalyses the reaction 4-methylamino-4-dedimethylamino-anhydrotetracycline + S-adenosyl-L-methionine = anhydrotetracycline + S-adenosyl-L-homocysteine + H(+). It participates in antibiotic biosynthesis; oxytetracycline biosynthesis. Functionally, involved in the biosynthesis of the tetracycline antibiotic, oxytetracycline. Catalyzes the dimethylation of 4-amino-4-de(dimethylamino)anhydrotetracycline (4-amino-ATC) to yield anhydrotetracycline (ATC). Also able to catalyze the dimethylation of 7-chloro-, 6-demethyl-, 2-decarboxamido-2-nitrile-, and 4-methylamino-derivatives of 4-amino-4-de(dimethylamino)anhydrotetracycline. The chain is N,N-dimethyltransferase OxyT from Streptomyces rimosus.